A 225-amino-acid polypeptide reads, in one-letter code: Ribonuclease 3 (225 aa).

The 127-residue stretch at 2–128 (LSTLIKKLKI…LFGAIYLDLG (127 aa)) folds into the RNase III domain. Glu-43 serves as a coordination point for Mg(2+). Residue Asp-47 is part of the active site. Residues Asn-114 and Glu-117 each contribute to the Mg(2+) site. The active site involves Glu-117. The region spanning 152–220 (DFKTQLQELV…ARYVLNILSK (69 aa)) is the DRBM domain.

This sequence belongs to the ribonuclease III family. In terms of assembly, homodimer. The cofactor is Mg(2+).

Its subcellular location is the cytoplasm. It carries out the reaction Endonucleolytic cleavage to 5'-phosphomonoester.. Functionally, digests double-stranded RNA. Involved in the processing of primary rRNA transcript to yield the immediate precursors to the large and small rRNAs (23S and 16S). Processes some mRNAs, and tRNAs when they are encoded in the rRNA operon. Processes pre-crRNA and tracrRNA of type II CRISPR loci if present in the organism. The sequence is that of Ribonuclease 3 from Phytoplasma mali (strain AT).